The following is a 573-amino-acid chain: Sulfate adenylyltransferase (573 aa).

Residues 1 to 169 are N-terminal; sequence MANSPHGGVL…IEAVNKLNHY (169 aa). Residues 170-394 are catalytic; it reads DYVALRYTPA…LRESSPPRHT (225 aa). Residue Gln197 coordinates sulfate. ATP is bound by residues 197 to 200 and 291 to 294; these read QTRN and GRDH. Residues Thr198, Arg199, and Asn200 contribute to the active site. Sulfate is bound at residue Arg199. Ala295 serves as a coordination point for sulfate. Val333 contributes to the ATP binding site. The segment at 395 to 573 is allosteric regulation domain; adenylyl-sulfate kinase-like; it reads QGFTVFLTGY…LETEGFFDRA (179 aa). Residues 434-437, Arg451, 477-478, and Arg515 contribute to the 3'-phosphoadenylyl sulfate site; these read DTVR and IA.

This sequence in the N-terminal section; belongs to the sulfate adenylyltransferase family. The protein in the C-terminal section; belongs to the APS kinase family. As to quaternary structure, homohexamer. Dimer of trimers.

It localises to the cytoplasm. It catalyses the reaction sulfate + ATP + H(+) = adenosine 5'-phosphosulfate + diphosphate. The protein operates within sulfur metabolism; hydrogen sulfide biosynthesis; sulfite from sulfate: step 1/3. With respect to regulation, allosterically inhibited by 3'-phosphoadenosine 5'-phosphosulfate (PAPS). In terms of biological role, catalyzes the first intracellular reaction of sulfate assimilation, forming adenosine-5'-phosphosulfate (APS) from inorganic sulfate and ATP. Plays an important role in sulfate activation as a component of the biosynthesis pathway of sulfur-containing amino acids. The sequence is that of Sulfate adenylyltransferase from Aspergillus oryzae (strain ATCC 42149 / RIB 40) (Yellow koji mold).